Here is a 535-residue protein sequence, read N- to C-terminus: Flavin-containing monooxygenase iboF (535 aa).

Residues 1–24 (MFSLRPTALVSLSVVLFSIQETLS) form the signal peptide. Residue 60–65 (GAGPSG) coordinates FAD. Asparagine 134, asparagine 243, and asparagine 300 each carry an N-linked (GlcNAc...) asparagine glycan. 307–312 (GAAASG) is a binding site for NADP(+). N-linked (GlcNAc...) asparagine glycans are attached at residues asparagine 356, asparagine 382, and asparagine 410.

This sequence belongs to the FMO family. Requires FAD as cofactor.

It functions in the pathway secondary metabolite biosynthesis. Flavin-containing monooxygenase; part of the gene cluster that mediates the biosynthesis of the psychoactive metabolites ibotenic acid and muscimol. The first committed step is glutamate hydroxylation by the 2-oxoglutarate-dependent dioxygenase iboH, and the last step is decarboxylation of ibotenic acid to muscimol by the decarboxylase iboD. The order of the intermediate reactions is somewhat ambiguous. IboA likely activates the carboxylic acid at position 5 to introduce an amide bond, and the flavin monooxygenase iboF generates the N-O bond. There are several options for the latter step. One option is that iboF directly hydroxylates the amide nitrogen formed by iboA to produce a hydroxamic acid species. Another option is that iboF hydroxylates an external N-containing compound, whose resulting N-O bond is subsequently introduced into the hydroxyglutamate scaffold. The paralogous PLP-dependent cystathionine gamma-synthase-like enzymes iboG1 and iboG2 are likely involved in substitution of the OH group at position 3 by the O-N moiety. The first cyclic intermediate is most probably tricholomic acid which is likely desaturated to ibotenic acid by the cytochrome P450 monooxygenase iboC. The chain is Flavin-containing monooxygenase iboF from Amanita muscaria (strain Koide BX008).